Consider the following 105-residue polypeptide: MGTLTISISDDVEKRLRDVVKEKHGSSKGAMSKVIEEALKIYFSILEKKKKVFRAYRGEELVAEAHDLEELAKILREKNVDPRSVKIVSSEHIKPVARMGWKYVR.

This is an uncharacterized protein from Archaeoglobus fulgidus (strain ATCC 49558 / DSM 4304 / JCM 9628 / NBRC 100126 / VC-16).